Here is a 75-residue protein sequence, read N- to C-terminus: Putative antitoxin VapB12 (75 aa).

Putative antitoxin component of a possible type II toxin-antitoxin (TA) system. The cognate toxin is VapC12. This Mycobacterium tuberculosis (strain CDC 1551 / Oshkosh) protein is Putative antitoxin VapB12 (vapB12).